We begin with the raw amino-acid sequence, 224 residues long: tRNA (guanine-N(7)-)-methyltransferase (224 aa).

4 residues coordinate S-adenosyl-L-methionine: E45, E70, D97, and D119. D119 is a catalytic residue. Residues K123, D155, and 199–202 each bind substrate; that span reads TEYE.

This sequence belongs to the class I-like SAM-binding methyltransferase superfamily. TrmB family.

It carries out the reaction guanosine(46) in tRNA + S-adenosyl-L-methionine = N(7)-methylguanosine(46) in tRNA + S-adenosyl-L-homocysteine. It participates in tRNA modification; N(7)-methylguanine-tRNA biosynthesis. Catalyzes the formation of N(7)-methylguanine at position 46 (m7G46) in tRNA. The chain is tRNA (guanine-N(7)-)-methyltransferase from Ureaplasma parvum serovar 3 (strain ATCC 27815 / 27 / NCTC 11736).